The chain runs to 643 residues: uncharacterized protein (643 aa).

Low complexity predominate over residues 179-199 (FKSSQLQQSPSPNKKSPSYSQ). Disordered regions lie at residues 179-200 (FKSSQLQQSPSPNKKSPSYSQV) and 349-377 (KRSNSIDRAGIRSRRRSHSSPERSTSTEN).

This is an uncharacterized protein from Caenorhabditis elegans.